The primary structure comprises 1153 residues: Probable RNA-dependent RNA polymerase 3 (1153 aa).

This sequence belongs to the RdRP family. In terms of tissue distribution, expressed in shoot apical meristem (SAM) and panicles.

The catalysed reaction is RNA(n) + a ribonucleoside 5'-triphosphate = RNA(n+1) + diphosphate. In terms of biological role, probably involved in the RNA silencing pathway and required for the generation of small interfering RNAs (siRNAs). The sequence is that of Probable RNA-dependent RNA polymerase 3 (RDR3) from Oryza sativa subsp. japonica (Rice).